A 162-amino-acid chain; its full sequence is Large ribosomal subunit protein uL10 (162 aa).

Belongs to the universal ribosomal protein uL10 family. In terms of assembly, part of the ribosomal stalk of the 50S ribosomal subunit. The N-terminus interacts with L11 and the large rRNA to form the base of the stalk. The C-terminus forms an elongated spine to which L12 dimers bind in a sequential fashion forming a multimeric L10(L12)X complex.

Forms part of the ribosomal stalk, playing a central role in the interaction of the ribosome with GTP-bound translation factors. The polypeptide is Large ribosomal subunit protein uL10 (Acholeplasma laidlawii (strain PG-8A)).